A 569-amino-acid polypeptide reads, in one-letter code: AsmA family protein YicH (569 aa).

Residues 1–6 (MKFIGK) are Cytoplasmic-facing. The chain crosses the membrane as a helical span at residues 7-27 (LLLYILIALLVAIAGLYFLLQ). Topologically, residues 28–569 (TRWGAEHISA…GEVTSTEPVR (542 aa)) are periplasmic.

The protein belongs to the AsmA family.

It localises to the cell inner membrane. This chain is AsmA family protein YicH (yicH), found in Escherichia coli (strain K12).